Here is an 836-residue protein sequence, read N- to C-terminus: Hypoxia-inducible factor 1-alpha (836 aa).

The segment at 1–30 (MEGAGGENEKKKMSSERRKEKSRDAARSRR) is disordered. Residues 1-401 (MEGAGGENEK…KEPDALTLLA (401 aa)) form an interaction with TSGA10 region. The segment covering 7–30 (ENEKKKMSSERRKEKSRDAARSRR) has biased composition (basic and acidic residues). Positions 17 to 70 (RRKEKSRDAARSRRSKESEVFYELAHQLPLPHNVSSHLDKASVMRLTISYLRVR) constitute a bHLH domain. Positions 21-30 (KSRDAARSRR) are DNA-binding. The region spanning 80-155 (SEDEMKAQMD…EMLTHRNGPV (76 aa)) is the PAS 1 domain. Residues 170-191 (RMKCTLTSRGRTMNIKSATWKV) form a required for heterodimer formation with ARNT region. The region spanning 228–298 (PHPSNIEIPL…KTHHDMFTKG (71 aa)) is the PAS 2 domain. Residue Ser-247 is modified to Phosphoserine; by CK1. A PAC domain is found at 302–345 (TGQYRMLAKRGGYVWVETQATVIYNTKNSQPQCIVCVNYVVSGI). Positions 380–417 (SEDTSCLFDKLKKEPDALTLLAPAAGDTIISLDFGSDD) are N-terminal VHL recognition site. Lys-391 participates in a covalent cross-link: Glycyl lysine isopeptide (Lys-Gly) (interchain with G-Cter in SUMO). Residues 401–613 (APAAGDTIIS…PSMSTVTGFQ (213 aa)) form an ODD region. Residue Pro-402 is modified to 4-hydroxyproline. A Glycyl lysine isopeptide (Lys-Gly) (interchain with G-Cter in SUMO) cross-link involves residue Lys-476. Positions 492–511 (QIQDQPASPSDGSTRQSSPE) are disordered. The tract at residues 544-588 (FKLELVEKLFAEDTEAKNPFSTQDTDLDLEMLAPYIPMDDDFQLR) is NTAD. Position 545 is an N6-acetyllysine; alternate (Lys-545). Glycyl lysine isopeptide (Lys-Gly) (interchain with G-Cter in ubiquitin) cross-links involve residues Lys-545, Lys-551, and Lys-560. Lys-545 participates in a covalent cross-link: Glycyl lysine isopeptide (Lys-Gly) (interchain with G-Cter in ubiquitin); alternate. Position 564 is a phosphoserine; by GSK3-beta (Ser-564). Thr-568 is subject to Phosphothreonine; by GSK3-beta. Residues 569–585 (DLDLEMLAPYIPMDDDF) form a C-terminal VHL recognition site region. Position 577 is a 4-hydroxyproline (Pro-577). A Phosphoserine; by PLK3 modification is found at Ser-589. Residues 589 to 795 (SFDQLSPLES…SDLACRLLGQ (207 aa)) form an ID region. Disordered regions lie at residues 593–684 (LSPL…DRAG) and 707–734 (QRNT…KMEH). A Phosphoserine; by GSK3-beta modification is found at Ser-602. Polar residues predominate over residues 608-620 (TVTGFQQTQLQKP). The segment covering 621–632 (TITATATTTATT) has biased composition (low complexity). The segment covering 633-647 (DESKTETKDNKEDIK) has biased composition (basic and acidic residues). The span at 652–678 (SPSSTQVPQETTTAKASAYSGTHSRTA) shows a compositional bias: polar residues. Phosphoserine; by PLK3 is present on Ser-668. At Lys-719 the chain carries N6-acetyllysine. Positions 728–731 (RKRK) match the Nuclear localization signal motif. The CTAD stretch occupies residues 796 to 836 (SMDESGLPQLTSYDCEVNAPIQGSRNLLQGEELLRALDQVN). An S-nitrosocysteine modification is found at Cys-810. Asn-813 bears the (3S)-3-hydroxyasparagine mark.

Interacts with the ARNT; forms a heterodimer that binds core DNA sequence 5'-TACGTG-3' within the hypoxia response element (HRE) of target gene promoters. Interacts with COPS5; the interaction increases the transcriptional activity of HIF1A through increased stability. Interacts with EP300 (via TAZ-type 1 domains); the interaction is stimulated in response to hypoxia and inhibited by CITED2. Interacts with CREBBP (via TAZ-type 1 domains). Interacts with NCOA1, NCOA2, APEX1 and HSP90. Interacts (hydroxylated within the ODD domain) with VHLL (via beta domain); the interaction, leads to polyubiquitination and subsequent HIF1A proteasomal degradation. During hypoxia, sumoylated HIF1A also binds VHL; the interaction promotes the ubiquitination of HIF1A. Interacts with SENP1; the interaction desumoylates HIF1A resulting in stabilization and activation of transcription. Interacts (via the ODD domain) with NAA10; the interaction appears not to acetylate HIF1A nor have any affect on protein stability, during hypoxia. Interacts with RWDD3; the interaction enhances HIF1A sumoylation. Interacts with TSGA10. Interacts with HIF3A. Interacts with RORA (via the DNA binding domain); the interaction enhances HIF1A transcription under hypoxia through increasing protein stability. Interaction with PSMA7 inhibits the transactivation activity of HIF1A under both normoxic and hypoxia-mimicking conditions. Interacts with USP20. Interacts with RACK1; promotes HIF1A ubiquitination and proteasome-mediated degradation. Interacts (via N-terminus) with USP19. Interacts with SIRT2. Interacts (deacetylated form) with EGLN1. Interacts with CBFA2T3. Interacts with HSP90AA1 and HSP90AB1. Interacts with DCUN1D1; this interaction increases the interaction between VHL and DCUN1D1. Interacts with HIF1AN. S-nitrosylation of Cys-810 may be responsible for increased recruitment of p300 coactivator necessary for transcriptional activity of HIF-1 complex. In terms of processing, requires phosphorylation for DNA-binding. Phosphorylation at Ser-247 by CSNK1D/CK1 represses kinase activity and impairs ARNT binding. Phosphorylation by GSK3-beta and PLK3 promote degradation by the proteasome. Post-translationally, sumoylated; with SUMO1 under hypoxia. Sumoylation is enhanced through interaction with RWDD3. Both sumoylation and desumoylation seem to be involved in the regulation of its stability during hypoxia. Sumoylation can promote either its stabilization or its VHL-dependent degradation by promoting hydroxyproline-independent HIF1A-VHL complex binding, thus leading to HIF1A ubiquitination and proteasomal degradation. Desumoylation by SENP1 increases its stability amd transcriptional activity. There is a disaccord between various publications on the effect of sumoylation and desumoylation on its stability and transcriptional activity. Acetylation of Lys-545 by ARD1 increases interaction with VHL and stimulates subsequent proteasomal degradation. Deacetylation of Lys-719 by SIRT2 increases its interaction with and hydroxylation by EGLN1 thereby inactivating HIF1A activity by inducing its proteasomal degradation. In terms of processing, ubiquitinated; in normoxia, following hydroxylation and interaction with VHL. Lys-545 appears to be the principal site of ubiquitination. Clioquinol, the Cu/Zn-chelator, inhibits ubiquitination through preventing hydroxylation at Asn-813. Ubiquitinated by E3 ligase VHL. Deubiquitinated by UCHL1. Post-translationally, the iron and 2-oxoglutarate dependent 3-hydroxylation of asparagine is (S) stereospecific within HIF CTAD domains. In normoxia, is hydroxylated on Pro-402 and Pro-577 in the oxygen-dependent degradation domain (ODD) by EGLN1/PHD2 and EGLN2/PHD1. EGLN3/PHD3 has also been shown to hydroxylate Pro-577. The hydroxylated prolines promote interaction with VHL, initiating rapid ubiquitination and subsequent proteasomal degradation. Deubiquitinated by USP20. Under hypoxia, proline hydroxylation is impaired and ubiquitination is attenuated, resulting in stabilization. In normoxia, is hydroxylated on Asn-813 by HIF1AN, thus abrogating interaction with CREBBP and EP300 and preventing transcriptional activation. Repressed by iron ion, via Fe(2+) prolyl hydroxylase (PHD) enzymes-mediated hydroxylation and subsequent proteasomal degradation. In terms of tissue distribution, ubiquitous.

It localises to the cytoplasm. The protein resides in the nucleus. It is found in the nucleus speckle. With respect to regulation, induced by reactive oxygen species (ROS). Its function is as follows. Functions as a master transcriptional regulator of the adaptive response to hypoxia. Under hypoxic conditions, activates the transcription of over 40 genes, including erythropoietin, glucose transporters, glycolytic enzymes, vascular endothelial growth factor, HILPDA, and other genes whose protein products increase oxygen delivery or facilitate metabolic adaptation to hypoxia. Plays an essential role in embryonic vascularization, tumor angiogenesis and pathophysiology of ischemic disease. Heterodimerizes with ARNT; heterodimer binds to core DNA sequence 5'-TACGTG-3' within the hypoxia response element (HRE) of target gene promoters. Activation requires recruitment of transcriptional coactivators such as CREBBP and EP300. Activity is enhanced by interaction with NCOA1 and/or NCOA2. Interaction with redox regulatory protein APEX1 seems to activate CTAD and potentiates activation by NCOA1 and CREBBP. Involved in the axonal distribution and transport of mitochondria in neurons during hypoxia. In Mus musculus (Mouse), this protein is Hypoxia-inducible factor 1-alpha (Hif1a).